Here is a 146-residue protein sequence, read N- to C-terminus: Hemoglobin subunit theta (146 aa).

The Globin domain occupies 2–146; it reads HFTAEEKSVI…VATALAHKYH (145 aa). Heme b contacts are provided by histidine 63 and histidine 92.

The protein belongs to the globin family.

This Sus scrofa (Pig) protein is Hemoglobin subunit theta.